Here is a 930-residue protein sequence, read N- to C-terminus: Short transient receptor potential channel 6 (930 aa).

Residues M1–E27 are disordered. The Cytoplasmic portion of the chain corresponds to M1 to G437. 4 ANK repeats span residues I96–V125, M131–V160, D162–G188, and H217–R246. Residues P438–M458 form a helical membrane-spanning segment. Residues N459 to K486 lie on the Extracellular side of the membrane. A helical transmembrane segment spans residues T487–A507. Topologically, residues E508–Y520 are cytoplasmic. A helical membrane pass occupies residues L521–I541. Residues A542–Q591 lie on the Extracellular side of the membrane. N-linked (GlcNAc...) asparagine glycosylation occurs at N560. Residues I592–I612 form a helical membrane-spanning segment. Over L613–K635 the chain is Cytoplasmic. Residues F636–S656 form a helical membrane-spanning segment. The Extracellular segment spans residues Y657–V705. The helical transmembrane segment at L706 to I726 threads the bilayer. The Cytoplasmic portion of the chain corresponds to N727–R930. S814 is subject to Phosphoserine.

The protein belongs to the transient receptor (TC 1.A.4) family. STrpC subfamily. TRPC6 sub-subfamily. As to quaternary structure, homodimer; forms channel complex. Interacts with MX1 and RNF24. Phosphorylated by FYN, leading to an increase of TRPC6 channel activity. Post-translationally, N-glycosylated. In terms of tissue distribution, lung and brain.

It is found in the cell membrane. It catalyses the reaction Ca(2+)(in) = Ca(2+)(out). In terms of biological role, forms a receptor-activated non-selective calcium permeant cation channel. Probably is operated by a phosphatidylinositol second messenger system activated by receptor tyrosine kinases or G-protein coupled receptors. Activated by diacylglycerol (DAG) in a membrane-delimited fashion, independently of protein kinase C. Seems not to be activated by intracellular calcium store depletion. In Mus musculus (Mouse), this protein is Short transient receptor potential channel 6.